The sequence spans 114 residues: Iron-sulfur cluster insertion protein ErpA (114 aa).

Iron-sulfur cluster contacts are provided by cysteine 42, cysteine 106, and cysteine 108.

It belongs to the HesB/IscA family. In terms of assembly, homodimer. Requires iron-sulfur cluster as cofactor.

Its function is as follows. Required for insertion of 4Fe-4S clusters for at least IspG. The protein is Iron-sulfur cluster insertion protein ErpA of Wigglesworthia glossinidia brevipalpis.